Consider the following 429-residue polypeptide: Enolase (429 aa).

Glutamine 163 lines the (2R)-2-phosphoglycerate pocket. Residue glutamate 205 is the Proton donor of the active site. Mg(2+)-binding residues include aspartate 242, glutamate 287, and aspartate 314. 4 residues coordinate (2R)-2-phosphoglycerate: lysine 339, arginine 368, serine 369, and lysine 390. Lysine 339 (proton acceptor) is an active-site residue.

The protein belongs to the enolase family. Requires Mg(2+) as cofactor.

The protein resides in the cytoplasm. It localises to the secreted. The protein localises to the cell surface. The catalysed reaction is (2R)-2-phosphoglycerate = phosphoenolpyruvate + H2O. The protein operates within carbohydrate degradation; glycolysis; pyruvate from D-glyceraldehyde 3-phosphate: step 4/5. Functionally, catalyzes the reversible conversion of 2-phosphoglycerate (2-PG) into phosphoenolpyruvate (PEP). It is essential for the degradation of carbohydrates via glycolysis. This is Enolase from Anaeromyxobacter dehalogenans (strain 2CP-1 / ATCC BAA-258).